The primary structure comprises 370 residues: Glutamine synthetase (370 aa).

Position 2 is an N-acetylalanine (alanine 2). Serine 5 carries the phosphoserine modification. Residues 24-103 form the GS beta-grasp domain; it reads IIAEYVWIDG…VLAACYNNDG (80 aa). One can recognise a GS catalytic domain in the interval 110-370; sequence HRHEAAKLFA…MTKEFERESS (261 aa). Residues lysine 283, lysine 324, and lysine 363 each participate in a glycyl lysine isopeptide (Lys-Gly) (interchain with G-Cter in ubiquitin) cross-link.

This sequence belongs to the glutamine synthetase family. Homooctamer.

It is found in the cytoplasm. It catalyses the reaction L-glutamate + NH4(+) + ATP = L-glutamine + ADP + phosphate + H(+). This Saccharomyces cerevisiae (strain ATCC 204508 / S288c) (Baker's yeast) protein is Glutamine synthetase (GLN1).